We begin with the raw amino-acid sequence, 286 residues long: Beta-lactamase SHV-1 (286 aa).

The signal sequence occupies residues 1–21; it reads MRYIRLCIISLLATLPLAVHA. Ser-66 serves as the catalytic Acyl-ester intermediate. Cys-73 and Cys-119 are joined by a disulfide. The active-site Proton acceptor is Glu-164. A substrate-binding site is contributed by 230 to 232; that stretch reads KTG.

Belongs to the class-A beta-lactamase family.

The catalysed reaction is a beta-lactam + H2O = a substituted beta-amino acid. The sequence is that of Beta-lactamase SHV-1 (bla) from Escherichia coli.